The chain runs to 193 residues: Recombination protein RecR (193 aa).

A C4-type zinc finger spans residues 61 to 76 (CSSCNALSESEVCEIC). One can recognise a Toprim domain in the interval 84-170 (SQLCMVLHPR…TFTKIAQGVP (87 aa)).

The protein belongs to the RecR family.

May play a role in DNA repair. It seems to be involved in an RecBC-independent recombinational process of DNA repair. It may act with RecF and RecO. This Helicobacter pylori (strain G27) protein is Recombination protein RecR.